Consider the following 2320-residue polypeptide: MAPKKEKPTGSANYKIWEPSLIAAHLNQNDWKASIAFVVGNRVEDDLLIHALDLAVRLPQRKLFSIVSWEDILQQMDEIQSLAESASAKKGKKPTSVNLPLHYEVFLAAKIIMESGEKLTLPLIGKLLKCQLLHIKSKDQQRRENEKKMVEERTKSEKDKGKGKSPKEKKVASAKPGKGKSKDQPEATVTVRKTTQLKRRGEDDEAKSYIDDEPDDGAQYYIIVVGFNNPQLLAIMTELGIPITSVIKISSENYEPLQTHLAAVRQQQEAVLQPEDIEAEKLKRKNSIKELEVFWKYLEPILNNEKLEIHLFDVARLQYMVKATYFPSDWSDNEQMLALGTEIFENIACLMYDSLDWKRQHHHYLQSMQLINVPQVVSEKTVLEAITIPEPPPSTAPAPTGKKKAQYEESHAPPTVAFIITTEVDMRYYNDLLNPIPEEFISVSLILHCMVEQVVATEEDLIPPSLVEPAPRADGLDYRIAAHIVSILPSLCLSEKEKKNLREIFLTEGESESKALPKGPLLLNYHDAHAHKKYALKDQKNFDPVQVEQEMQSKLPLWEFLQFPLPPPWNSTKRLATIHELMHFCTNEVLSWNEVERAFKVFTFESLKLSEVDEEGRLKPTETTSDTDVENFNIPWDNPARFAKLIRQRYIHRMSMQKAPPVVVEIENTERTLFVNKNFAKAEQDAQGDENSPNSDEPDAISVTGSTSNSTKPWNSSNRQFSEKETSGSMWPQPESMDQTMDTEIKDDAATKDDSPEKKPKKMVVEADIEDIKKTQQRSLMDWSFTEYFQPKVLLQVLQEAHQQYRCVDSYYHTQDNSLLLVFHNPMNLQRLQCEHWNIALHSNVGFRNYLELVAKSIEDWVTQEEAKYQEAKMAEELNRIRIELELKATVKTSASKIPGPKRSKTNKVSSKTELSDQEKDKEKEKDKIPFVLEGSLKAWKEEQERLAEEERLKEEKKAEKKGKDTGKKKGKDKADKDDAKALKKKSSSKEKPKEEPAKTLEVIEETAPLPVPEVVYPFRGYNMGDIPIQISGTNYYLYPSDGGQIEVEKTRFERGSTFIKVKVKKDKHNFIIHLKDPKEIVKKEKEEKNSEEEEEEEEEKEEVEEKKPKEGEEEKVKQKVEMKRAQIEKEAVSKFGSFSATLENGICLSISYYGSNGMAPEVINSELEAMMNIPSAMTATVVPAVVTVPQGKGKAKPKGKEKHKDSIKEEELPKEEEKKNHIQEEVEPEIVIQESPPYVPTFQNLNVSCPSGLLLTFIGQESTDYSIVDEEPTRNLMIRQSYPQRLKHYEFYKAVMPPLEQEASRVVTSQGTVIKYMLDGSTQILFADGAVSSSPDSGPVYTSPELPTSPHNGDLVDSASQPKSETGPEIIITKKGKGHKNQTVANKSETHDIIPEVPPPTPVESHIGTWFTTTPDGRRIGTKGLEKIEDLKPYLFFQATDPINGTVMTTREDKVIIVEKKDGTRVVDHADGTRITTFYQVYEDHITPSNDEETTEGPRTVTRQVKCMRIESSHYATIITNCEDSSCCATFGDGTSIIAKPQGSYQVLPPNTGCLYIDKDCSATYCHESSNNLYHPFQKREQLRASRYIMKHTSEVICEVQDPEGNTFQVMADGSVSTTLPKKKLEDDFNVQMEGYESLSSLHLEKNHMQIYGEHVPRFFVVYTDGSGVELLRDSDIEEYLSLAYGESTTVVLQEPVQEYPGALSITVLRPFHEASQWIMKKELDTIVPPNLQSRSWERFPSVEKKTPGPPFGTQIWKGLSIGSKQLTNIPAPILEGPKVLQMRQFIQHEVIKNEVKLKLQISLKDYINHILKKEDELQEMTVKDSRTEEERGNAADLLKLVMSFPKMEETTKSHMTKVAAHLTVLFKQSMASAPKCSPDSYSKEFLEKKWRSLSQGTSWKEKLEQQRNNIKKTQSYLMQIKTKEVTPYFKSELSSLFKSKYDYLEKFSKSLPPFVKKNEAKLMTAVPDLYSDSTLTVDTEKEASNTHPLLNQEVAENIQESPREKETEYVNKSLQTSSSQNQYENVTISPKESVYQSQTEIETKDTKESAIQNFTEKFKKYTKKSASQNEIEDLIKSTKESVSQRQTENVTRPPTEEPDIYMPIKIPTQSLLQDVTGQARKEKVRLPYYMMSSKPKSQPYAKVEDPVGGRVNTSSIASAAMYNPNASPFGFHLLPPSVKFGVLKEGHTYATIVKLKNVGVDFCRFRVKQPPPSTGLKVTYKPGPVAAGLQAELKVELFAMAVGEDGAKGSAHISHNIEIMTEHDVLFLPVEATVLTSSNYDNRPKNLPQGKENPMVFRTSTISSSSLGVVMSQKATHH.

Basic and acidic residues-rich tracts occupy residues D139–V171 and R199–I210. Disordered regions lie at residues D139–D211, I388–Y407, A682–Q739, S894–K928, E950–L1001, K1084–K1118, Q1191–N1221, S1334–T1367, D1393–P1416, K1983–V2028, and T2080–D2101. Residues V703–Q720 show a composition bias toward polar residues. Residues E865–D965 adopt a coiled-coil conformation. Composition is skewed to basic and acidic residues over residues E914 to K928 and E950 to K999. Acidic residues predominate over residues N1090–E1103. 2 stretches are compositionally biased toward basic and acidic residues: residues V1104–K1118 and K1203–N1221. Composition is skewed to polar residues over residues V2012–V2028 and E2082–R2094.

Interacts (via the C-terminus) with SPAG6; the interaction probably occurs on polymerized microtubules. In terms of tissue distribution, highly expressed in testis, round spermatids, testicular sperm, epididymal sperm and in condensing spermatids (at protein level). Expressed in organs that contain cilia-bearing cells including brain, oviduct, lung, and uterus. Expressed in articular cartilage and bone.

The protein resides in the cytoplasm. Its subcellular location is the cytoskeleton. It is found in the flagellum axoneme. It localises to the cytoplasmic vesicle. The protein localises to the secretory vesicle. The protein resides in the acrosome. Its subcellular location is the golgi apparatus. Its function is as follows. Component of the central pair apparatus of ciliary axonemes. Plays a critical role in the function and structure of motile cilia. May play a role in endochondral bone formation, most likely because of a function in primary cilia of chondrocytes and osteoblasts. Essential for normal spermatogenesis and male fertility. Required for normal manchette structure, transport of proteins along the manchette microtubules and formation of the sperm head and flagellum. Essential for sperm flagellum development and proper assembly of the respiratory motile cilia central pair apparatus, but not the brain ependymal cilia. This is Sperm-associated antigen 17 (Spag17) from Mus musculus (Mouse).